Here is a 118-residue protein sequence, read N- to C-terminus: Small ribosomal subunit protein uS13 (118 aa).

The interval 94 to 118 (SLPVRGQRSKTNARTRKGPRKAIKK) is disordered.

Belongs to the universal ribosomal protein uS13 family. In terms of assembly, part of the 30S ribosomal subunit. Forms a loose heterodimer with protein S19. Forms two bridges to the 50S subunit in the 70S ribosome.

Located at the top of the head of the 30S subunit, it contacts several helices of the 16S rRNA. In the 70S ribosome it contacts the 23S rRNA (bridge B1a) and protein L5 of the 50S subunit (bridge B1b), connecting the 2 subunits; these bridges are implicated in subunit movement. Contacts the tRNAs in the A and P-sites. The protein is Small ribosomal subunit protein uS13 of Psychromonas ingrahamii (strain DSM 17664 / CCUG 51855 / 37).